The chain runs to 139 residues: Putative pre-16S rRNA nuclease (139 aa).

This sequence belongs to the YqgF nuclease family.

It is found in the cytoplasm. Functionally, could be a nuclease involved in processing of the 5'-end of pre-16S rRNA. In Photorhabdus laumondii subsp. laumondii (strain DSM 15139 / CIP 105565 / TT01) (Photorhabdus luminescens subsp. laumondii), this protein is Putative pre-16S rRNA nuclease.